We begin with the raw amino-acid sequence, 159 residues long: 6,7-dimethyl-8-ribityllumazine synthase (159 aa).

5-amino-6-(D-ribitylamino)uracil contacts are provided by residues Trp27, 62 to 64 (SWE), and 86 to 88 (VLI). 91–92 (ST) is a (2S)-2-hydroxy-3-oxobutyl phosphate binding site. The Proton donor role is filled by His94. Leu119 provides a ligand contact to 5-amino-6-(D-ribitylamino)uracil. Arg133 provides a ligand contact to (2S)-2-hydroxy-3-oxobutyl phosphate.

As to quaternary structure, homopentamer.

The catalysed reaction is (2S)-2-hydroxy-3-oxobutyl phosphate + 5-amino-6-(D-ribitylamino)uracil = 6,7-dimethyl-8-(1-D-ribityl)lumazine + phosphate + 2 H2O + H(+). Its pathway is cofactor biosynthesis; riboflavin biosynthesis; riboflavin from 2-hydroxy-3-oxobutyl phosphate and 5-amino-6-(D-ribitylamino)uracil: step 1/2. Competitively inhibited by riboflavin (Ki of 17 uM). In terms of biological role, catalyzes the formation of 6,7-dimethyl-8-ribityllumazine by condensation of 5-amino-6-(D-ribitylamino)uracil with 3,4-dihydroxy-2-butanone 4-phosphate. This is the penultimate step in the biosynthesis of riboflavin. Also binds riboflavin with an unexpected high affinity. The sequence is that of 6,7-dimethyl-8-ribityllumazine synthase (rib4) from Schizosaccharomyces pombe (strain 972 / ATCC 24843) (Fission yeast).